The primary structure comprises 309 residues: Protein lifeguard 3 (309 aa).

2 disordered regions span residues 1–31 (MSNP…QPSV) and 64–84 (PMNY…SFRP). Basic and acidic residues predominate over residues 70–84 (DYNEEERAGSDSFRP). Residues S79 and S81 each carry the phosphoserine modification. 7 helical membrane-spanning segments follow: residues 101 to 121 (YCII…FTFV), 132 to 152 (VAVY…LACC), 163 to 183 (IILL…ISSM), 188 to 208 (AVII…IFCF), 221 to 241 (FCVL…VLIF), 244 to 264 (IYWL…LFLA), and 286 to 306 (GALQ…QLVG).

This sequence belongs to the BI1 family. LFG subfamily. In terms of tissue distribution, expressed in most tissues except spleen, thymus and testis.

The protein localises to the membrane. Its subcellular location is the lysosome membrane. It is found in the endosome membrane. Negatively regulates aortic matrix metalloproteinase-9 (MMP9) production and may play a protective role in vascular remodeling. This chain is Protein lifeguard 3 (Tmbim1), found in Mus musculus (Mouse).